Reading from the N-terminus, the 199-residue chain is UPF0316 protein LA_0606 (199 aa).

2 helical membrane-spanning segments follow: residues 47–67 (IAAS…TQVI) and 73–93 (VFCY…GMIL).

It belongs to the UPF0316 family.

It localises to the cell membrane. This Leptospira interrogans serogroup Icterohaemorrhagiae serovar Lai (strain 56601) protein is UPF0316 protein LA_0606.